A 609-amino-acid chain; its full sequence is Spore-specific protein YSW1 (609 aa).

The segment at 1-24 (MSSLADTVEGSEAKRGRFSNNALT) is disordered. Phosphoserine is present on residues Ser-159 and Ser-160. Residues 162-225 (DENESHFTDA…DDEFSPATPP (64 aa)) are disordered. Polar residues predominate over residues 169–179 (TDANSHVMQSK). The segment covering 200-209 (LKKEYEKSFE) has biased composition (basic and acidic residues). Over residues 210-219 (EYSDDSDDEF) the composition is skewed to acidic residues.

The protein is Spore-specific protein YSW1 (YSW1) of Saccharomyces cerevisiae (strain ATCC 204508 / S288c) (Baker's yeast).